A 577-amino-acid polypeptide reads, in one-letter code: ABC transporter G family member 4 (577 aa).

The ABC transporter domain occupies 6–248; it reads LSTSSISYAK…LLSKGFTVPS (243 aa). 48–55 is an ATP binding site; it reads GPSGAGKS. Residues 299 to 509 enclose the ABC transmembrane type-2 domain; that stretch reads TEISLLSSRF…ALDALLINEY (211 aa). Helical transmembrane passes span 318–338, 353–373, 400–420, 429–449, 458–478, 487–507, and 548–568; these read LLLT…TIYL, LFAF…PIFI, VFLP…YFLV, LAYF…FVLF, IAGT…SGYF, YWLF…LLIN, and FNVY…FLVL.

It belongs to the ABC transporter superfamily. ABCG family. Eye pigment precursor importer (TC 3.A.1.204) subfamily.

Its subcellular location is the membrane. In Arabidopsis thaliana (Mouse-ear cress), this protein is ABC transporter G family member 4 (ABCG4).